The following is a 932-amino-acid chain: Protocadherin gamma-A3 (932 aa).

The signal sequence occupies residues 1-29; that stretch reads MTNCLSFRNGRGLALLCALLGTLCETGSG. Cadherin domains are found at residues 30 to 133, 134 to 242, 243 to 347, 348 to 452, 453 to 562, and 570 to 682; these read QIRY…APNF, PTEE…PPMF, TQPE…APEI, TITS…PPTF, PHLS…APEI, and DGST…EPSA. Residues 30 to 692 lie on the Extracellular side of the membrane; that stretch reads QIRYSVSEEL…KPNDSDLTLY (663 aa). Residues Asn265, Asn419, and Asn545 are each glycosylated (N-linked (GlcNAc...) asparagine). N-linked (GlcNAc...) asparagine glycosylation is present at Asn685. A helical membrane pass occupies residues 693 to 713; the sequence is LVVAVAAVSCVFLAFVIVLLA. Topologically, residues 714–932 are cytoplasmic; that stretch reads LRLRRWHKSR…KKKSGKKEKK (219 aa). 2 disordered regions span residues 805-841 and 902-932; these read NLLQ…WPNN and ATLT…KEKK. Residues 922-932 show a composition bias toward basic residues; it reads NKKKSGKKEKK.

It localises to the cell membrane. Its function is as follows. Potential calcium-dependent cell-adhesion protein. May be involved in the establishment and maintenance of specific neuronal connections in the brain. This Homo sapiens (Human) protein is Protocadherin gamma-A3 (PCDHGA3).